The primary structure comprises 506 residues: MEPRTLDNVASLAYFAPELVLIAAALLLVVWDLASPARLKLAGLVILSLAALACSGGLGAYFLATDAAPRALFHGLLAFDRFSNLFRVIFALVTGAIVLFLVPPRAPGIEPELRRDSGELFTLILVLSLGMNLMAASRHLLLIYLSLELVSVISFVLAGFKINDAKSSEAALKYVIFGGVASGIMLYGMSWIFGITASMRLDECAARIAALTAQQGKVPEVVFVGTAFMLAGFGYKISAAPFHMWTPDVYEGAPTPVTAFLSVGPKAAGFAVLIRFFSDALGAGSAPPGVATPWPVLFGCLAMATMTVGNLSALEQENVKRMLAYSSIAHAGYMLLGFSVFSGAGVAAIAFYIVTYCFMNLGAFMVVMAVAEESGGDETFAAFRGLGRRAPLVAAAMAVFLVSLTGLPPTAGFIGKFYLFSALLAAGGAWSWVIAVVGVLNSVISLFYYARLLRTMYLDRSDRTEPTPVRPLLGGTACALAIPTVLLGVYWGPVYDFVARSVSMLR.

14 helical membrane-spanning segments follow: residues 11 to 31 (SLAY…LVVW), 44 to 64 (LVIL…YFLA), 82 to 102 (FSNL…LFLV), 117 to 137 (SGEL…MAAS), 140 to 160 (LLLI…LAGF), 175 to 195 (VIFG…IFGI), 222 to 242 (VFVG…AAPF), 254 to 274 (PTPV…AVLI), 289 to 309 (GVAT…MTVG), 323 to 345 (LAYS…SGAG), 356 to 376 (YCFM…ESGG), 394 to 414 (AAAM…AGFI), 419 to 439 (LFSA…VVGV), and 472 to 492 (LLGG…VYWG).

It belongs to the complex I subunit 2 family. In terms of assembly, NDH-1 is composed of 14 different subunits. Subunits NuoA, H, J, K, L, M, N constitute the membrane sector of the complex.

Its subcellular location is the cell inner membrane. It carries out the reaction a quinone + NADH + 5 H(+)(in) = a quinol + NAD(+) + 4 H(+)(out). In terms of biological role, NDH-1 shuttles electrons from NADH, via FMN and iron-sulfur (Fe-S) centers, to quinones in the respiratory chain. The immediate electron acceptor for the enzyme in this species is believed to be ubiquinone. Couples the redox reaction to proton translocation (for every two electrons transferred, four hydrogen ions are translocated across the cytoplasmic membrane), and thus conserves the redox energy in a proton gradient. The sequence is that of NADH-quinone oxidoreductase subunit N 2 from Sorangium cellulosum (strain So ce56) (Polyangium cellulosum (strain So ce56)).